A 57-amino-acid chain; its full sequence is Small ribosomal subunit protein bS21 (57 aa).

The tract at residues 22–57 (QCSKSGVLSEAKKRKHYEKPSEKRKRKATEKRNSRK) is disordered. The span at 33 to 57 (KKRKHYEKPSEKRKRKATEKRNSRK) shows a compositional bias: basic residues.

The protein belongs to the bacterial ribosomal protein bS21 family.

The polypeptide is Small ribosomal subunit protein bS21 (Natranaerobius thermophilus (strain ATCC BAA-1301 / DSM 18059 / JW/NM-WN-LF)).